The chain runs to 259 residues: UPF0246 protein PputW619_0896 (259 aa).

The protein belongs to the UPF0246 family.

The polypeptide is UPF0246 protein PputW619_0896 (Pseudomonas putida (strain W619)).